A 395-amino-acid polypeptide reads, in one-letter code: ATP phosphoribosyltransferase regulatory subunit (395 aa).

Belongs to the class-II aminoacyl-tRNA synthetase family. HisZ subfamily. Heteromultimer composed of HisG and HisZ subunits.

The protein resides in the cytoplasm. It participates in amino-acid biosynthesis; L-histidine biosynthesis; L-histidine from 5-phospho-alpha-D-ribose 1-diphosphate: step 1/9. Required for the first step of histidine biosynthesis. May allow the feedback regulation of ATP phosphoribosyltransferase activity by histidine. The sequence is that of ATP phosphoribosyltransferase regulatory subunit from Pseudomonas putida (strain ATCC 700007 / DSM 6899 / JCM 31910 / BCRC 17059 / LMG 24140 / F1).